Consider the following 357-residue polypeptide: Fructose-bisphosphate aldolase (357 aa).

Residues R49 and K140 each contribute to the substrate site. E183 (proton acceptor) is an active-site residue. The active-site Schiff-base intermediate with dihydroxyacetone-P is K225.

It belongs to the class I fructose-bisphosphate aldolase family.

The catalysed reaction is beta-D-fructose 1,6-bisphosphate = D-glyceraldehyde 3-phosphate + dihydroxyacetone phosphate. The protein operates within carbohydrate degradation; glycolysis; D-glyceraldehyde 3-phosphate and glycerone phosphate from D-glucose: step 4/4. This is Fructose-bisphosphate aldolase (fba) from Dictyostelium discoideum (Social amoeba).